A 77-amino-acid chain; its full sequence is Teretoxin Tsu15.4 (77 aa).

Positions 1–21 (MTKLTVLLLAILVLLPLATSN) are cleaved as a signal peptide. Residues 22–40 (SAADEALASLSGLLRRAKR) constitute a propeptide that is removed on maturation.

Contains 4 disulfide bonds. In terms of tissue distribution, expressed by the venom duct.

Its subcellular location is the secreted. The sequence is that of Teretoxin Tsu15.4 from Terebra subulata (Chocolate spotted auger).